Reading from the N-terminus, the 617-residue chain is Proline--tRNA ligase (617 aa).

The protein belongs to the class-II aminoacyl-tRNA synthetase family. ProS type 1 subfamily. As to quaternary structure, homodimer.

It localises to the cytoplasm. The enzyme catalyses tRNA(Pro) + L-proline + ATP = L-prolyl-tRNA(Pro) + AMP + diphosphate. Functionally, catalyzes the attachment of proline to tRNA(Pro) in a two-step reaction: proline is first activated by ATP to form Pro-AMP and then transferred to the acceptor end of tRNA(Pro). As ProRS can inadvertently accommodate and process non-cognate amino acids such as alanine and cysteine, to avoid such errors it has two additional distinct editing activities against alanine. One activity is designated as 'pretransfer' editing and involves the tRNA(Pro)-independent hydrolysis of activated Ala-AMP. The other activity is designated 'posttransfer' editing and involves deacylation of mischarged Ala-tRNA(Pro). The misacylated Cys-tRNA(Pro) is not edited by ProRS. The sequence is that of Proline--tRNA ligase from Treponema pallidum (strain Nichols).